The chain runs to 536 residues: Copine-1 (536 aa).

C2 domains follow at residues 1-113 (MAHC…TLPL) and 122-244 (GRGT…ECIH). Ca(2+) is bound by residues D21, D27, D79, D81, D91, D152, and D158. An N6-acetyllysine modification is found at K170. Residues D213, D215, and D221 each contribute to the Ca(2+) site. Positions 282–484 (QINFTVGVDF…AARDIVQFVP (203 aa)) constitute a VWFA domain.

It belongs to the copine family. As to quaternary structure, homodimer; homodimerizes via its C2 domains. Interacts with p65/RELA (via N-terminus); this interaction induces proteolytic cleavage of p65/RELA subunit and inhibition of NF-kappa-B transcriptional activity. Interacts (via VWFA domain) with ACTB, CCDC22, MYCBP2, PPP5C, RDX and UBE2O. It depends on Ca(2+) as a cofactor. As to expression, expressed in liver, brain, heart, intestine, kidney and lung (at protein level).

It localises to the nucleus. The protein resides in the cytoplasm. It is found in the cell membrane. Functionally, calcium-dependent phospholipid-binding protein that plays a role in calcium-mediated intracellular processes. Involved in the TNF-alpha receptor signaling pathway in a calcium-dependent manner. Exhibits calcium-dependent phospholipid binding properties. Plays a role in neuronal progenitor cell differentiation; induces neurite outgrowth via a AKT-dependent signaling cascade and calcium-independent manner. May recruit target proteins to the cell membrane in a calcium-dependent manner. May function in membrane trafficking. Involved in TNF-alpha-induced NF-kappa-B transcriptional repression by inducing endoprotease processing of the transcription factor NF-kappa-B p65/RELA subunit. Also induces endoprotease processing of NF-kappa-B p50/NFKB1, p52/NFKB2, RELB and REL. This Rattus norvegicus (Rat) protein is Copine-1.